The sequence spans 107 residues: uncharacterized protein (107 aa).

The region spanning 6-107 is the Glutaredoxin domain; sequence KARIDQLVTA…QEMLEVALAS (102 aa). Lys23 provides a ligand contact to glutathione. Cys31 contacts [2Fe-2S] cluster. Residues Arg60 and 85–86 each bind glutathione; that span reads SD.

The protein belongs to the glutaredoxin family. Monothiol subfamily.

This is an uncharacterized protein from Synechocystis sp. (strain ATCC 27184 / PCC 6803 / Kazusa).